The chain runs to 693 residues: Golgin subfamily A member 6A (693 aa).

Residues 14-611 adopt a coiled-coil conformation; sequence LEESRQNKLA…KLLELQELVL (598 aa). Disordered stretches follow at residues 20–69, 497–547, and 661–693; these read NKLA…PGDS, LPGE…GTEQ, and NVEP…MQDT. Over residues 54–69 the composition is skewed to polar residues; it reads SPETTTSGGCHSPGDS. Basic and acidic residues predominate over residues 537–547; the sequence is LPKEKADGTEQ. Over residues 676–693 the composition is skewed to polar residues; the sequence is DNPTVQQIVQLSPVMQDT.

The protein belongs to the GOLGA6 family. Highly expressed in seminiferous tubes in testis. Highly expressed in spermatids, barely detectable in late pachytene spermatocytes, and not detectable in spermatogonia. Detected at intermediate levels in pancreas and lymph nodes, and at much lower levels in spleen, peripheral blood leukocytes, skeletal muscle, liver, lung, placenta, brain and heart.

This chain is Golgin subfamily A member 6A (GOLGA6A), found in Homo sapiens (Human).